A 128-amino-acid chain; its full sequence is MVERIEDLNLPNAVIGRLIKEALPESASVSKEARAAIARAASVFAIFVTSSSTALAHKQNHKTITAKDILQTLTELDFESFVPSLTQDLEVYRKVVKEKKESKASKKDSNTAENANASATATAEEAPE.

Over residues 98-110 (EKKESKASKKDSN) the composition is skewed to basic and acidic residues. A disordered region spans residues 98–128 (EKKESKASKKDSNTAENANASATATAEEAPE). Low complexity predominate over residues 111–128 (TAENANASATATAEEAPE).

Homodimer. Component of the DNA polymerase epsilon complex consisting of four subunits: the catalytic subunit PolE1/DNApol-epsilon255 and the accessory subunits PolE2/DNApol-epsilon58, Chrac-14/DNApolE3 and PolE4. Component of the chromatin accessibility complex (CHRAC), composed of Chrac-14, Chrac-16, Acf and Iswi. Forms an heterodimer with Chrac-16. The Chrac-14/Chrac-16 heterodimer interacts with Acf (via N-terminus). Interacts directly with Iswi and this interaction is further stabilized by association with Chrac-16. Component of the Ada2a-containing (ATAC) complex composed of at least Ada2a, Atac1, Hcf, Ada3, Gcn5, Mocs2B, Charac-14, Atac3, Atac2, NC2beta and wds. Interacts with cid.

It is found in the nucleus. Accessory component of the DNA polymerase epsilon complex. Participates in DNA repair and in chromosomal DNA replication. Histone-like protein which promotes nucleosome sliding of ATP-dependent nucleosome remodeling complexes. Part of the chromatin-accessibility complex (CHRAC) which uses energy/ATP to increase the general accessibility of DNA in chromatin. As a heterodimer with Chrac-16, binds DNA and facilitates nucleosome sliding by Acf. Has a role in DNA damage response by preventing cid mislocalization to chromatin. The chain is DNA polymerase epsilon subunit 3 from Drosophila melanogaster (Fruit fly).